Consider the following 170-residue polypeptide: Adenine phosphoribosyltransferase (170 aa).

Belongs to the purine/pyrimidine phosphoribosyltransferase family. In terms of assembly, homodimer.

Its subcellular location is the cytoplasm. It catalyses the reaction AMP + diphosphate = 5-phospho-alpha-D-ribose 1-diphosphate + adenine. The protein operates within purine metabolism; AMP biosynthesis via salvage pathway; AMP from adenine: step 1/1. Its function is as follows. Catalyzes a salvage reaction resulting in the formation of AMP, that is energically less costly than de novo synthesis. In Bacillus cereus (strain G9842), this protein is Adenine phosphoribosyltransferase.